The following is a 530-amino-acid chain: Membrane-associated transporter protein (530 aa).

Residues 1–45 lie on the Cytoplasmic side of the membrane; it reads MSGSNGPTDTHTYQSLAEDCPFGSVEQPKRSTGRLVMHSMAMFGR. Residues 46–66 form a helical membrane-spanning segment; it reads EFCYAVEAAYVTPVLLSVGLP. The Extracellular segment spans residues 67 to 68; that stretch reads KS. A helical membrane pass occupies residues 69–89; that stretch reads LYSMVWLLSPILGFLLQPVVG. Residues 90 to 105 are Cytoplasmic-facing; sequence SASDHCRARWGRRRPY. A helical membrane pass occupies residues 106 to 126; the sequence is ILTLAIMMLLGMALYLNGDAV. Over 127–138 the chain is Extracellular; it reads VSALVANPRQKL. A helical transmembrane segment spans residues 139 to 159; that stretch reads IWAISITMVGVVLFDFSADFI. Residues 160–184 lie on the Cytoplasmic side of the membrane; the sequence is DGPIKAYLFDVCSHQDKEKGLHYHA. The chain crosses the membrane as a helical span at residues 185–205; that stretch reads LFTGFGGALGYILGAIDWVHL. Residues 206–216 are Extracellular-facing; sequence DLGRLLGTEFQ. The chain crosses the membrane as a helical span at residues 217-237; the sequence is VMFFFSALVLILCFITHLCSI. Residues 238-318 are Cytoplasmic-facing; that stretch reads PEAPLRDAAT…ALVNMPSHYR (81 aa). Residues 275–299 form a disordered region; the sequence is KNGGADTEQPVQEWKNKKPSGQSQR. A helical membrane pass occupies residues 319–339; the sequence is CLCVSHLIGWTAFLSNMLFFT. At 340–366 the chain is on the extracellular side; the sequence is DFMGQIVYHGDPYGAHNSTEFLIYERG. A glycan (N-linked (GlcNAc...) asparagine) is linked at Asn-356. A helical transmembrane segment spans residues 367-387; the sequence is VEVGCWGLCINSVFSSVYSYF. The Cytoplasmic portion of the chain corresponds to 388–398; the sequence is QKAMVSYIGLK. The chain crosses the membrane as a helical span at residues 399–419; sequence GLYFMGYLLFGLGTGFIGLFP. At 420–425 the chain is on the extracellular side; it reads NVYSTL. The chain crosses the membrane as a helical span at residues 426 to 446; that stretch reads VLCSMFGVMSSTLYTVPFNLI. Residues 447–477 lie on the Cytoplasmic side of the membrane; sequence AEYHREEEKEKGQEAPGGPDNQGRGKGVDCA. A helical membrane pass occupies residues 478–498; the sequence is ALTCMVQLAQILVGGGLGFLV. At 499-504 the chain is on the extracellular side; the sequence is NMAGSV. Residues 505–525 traverse the membrane as a helical segment; the sequence is VVVVITASAVSLIGCCFVALF. Residues 526-530 are Cytoplasmic-facing; the sequence is VRYVD.

Belongs to the glycoside-pentoside-hexuronide (GPH) cation symporter transporter (TC 2.A.2) family. As to quaternary structure, interacts with TYRP1. In terms of tissue distribution, mainly expressed in eyeballs and skin melanocytes. Also detected in kidney, colon, gall bladder and pancreas.

The protein localises to the melanosome membrane. It catalyses the reaction sucrose(out) + H(+)(out) = sucrose(in) + H(+)(in). The catalysed reaction is D-glucose(out) + H(+)(out) = D-glucose(in) + H(+)(in). Functionally, proton-associated glucose and sucrose transporter. May be able to transport also fructose. Expressed at a late melanosome maturation stage where functions as a proton/glucose exporter which increase lumenal pH by decreasing glycolysis. Regulates melanogenesis by maintaining melanosome neutralization that is initially initiated by transient OCA2 and required for a proper function of the tyrosinase TYR. This chain is Membrane-associated transporter protein (Slc45a2), found in Mus musculus (Mouse).